A 385-amino-acid polypeptide reads, in one-letter code: Deoxyguanosinetriphosphate triphosphohydrolase-like protein (385 aa).

Residues 62–197 (RLTHSLEVAQ…VSLADDIAYS (136 aa)) form the HD domain.

Belongs to the dGTPase family. Type 2 subfamily.

The polypeptide is Deoxyguanosinetriphosphate triphosphohydrolase-like protein (Neorickettsia sennetsu (strain ATCC VR-367 / Miyayama) (Ehrlichia sennetsu)).